A 224-amino-acid chain; its full sequence is uncharacterized protein (224 aa).

This is an uncharacterized protein from Methanocaldococcus jannaschii (strain ATCC 43067 / DSM 2661 / JAL-1 / JCM 10045 / NBRC 100440) (Methanococcus jannaschii).